A 175-amino-acid polypeptide reads, in one-letter code: uncharacterized protein (175 aa).

A helical transmembrane segment spans residues 143 to 166 (TCFLFCAFVTSIFIETDYSIFFLL).

It localises to the membrane. This is an uncharacterized protein from Saccharomyces cerevisiae (strain ATCC 204508 / S288c) (Baker's yeast).